Here is a 154-residue protein sequence, read N- to C-terminus: SsrA-binding protein (154 aa).

The segment at 134–154 is disordered; the sequence is ETLRRRDAKREVERALKEKNR.

The protein belongs to the SmpB family.

The protein resides in the cytoplasm. Its function is as follows. Required for rescue of stalled ribosomes mediated by trans-translation. Binds to transfer-messenger RNA (tmRNA), required for stable association of tmRNA with ribosomes. tmRNA and SmpB together mimic tRNA shape, replacing the anticodon stem-loop with SmpB. tmRNA is encoded by the ssrA gene; the 2 termini fold to resemble tRNA(Ala) and it encodes a 'tag peptide', a short internal open reading frame. During trans-translation Ala-aminoacylated tmRNA acts like a tRNA, entering the A-site of stalled ribosomes, displacing the stalled mRNA. The ribosome then switches to translate the ORF on the tmRNA; the nascent peptide is terminated with the 'tag peptide' encoded by the tmRNA and targeted for degradation. The ribosome is freed to recommence translation, which seems to be the essential function of trans-translation. This Halalkalibacterium halodurans (strain ATCC BAA-125 / DSM 18197 / FERM 7344 / JCM 9153 / C-125) (Bacillus halodurans) protein is SsrA-binding protein.